The sequence spans 213 residues: NADH-quinone oxidoreductase subunit C (213 aa).

The protein belongs to the complex I 30 kDa subunit family. As to quaternary structure, NDH-1 is composed of 15 different subunits. Subunits NuoB, C, D, E, F, and G constitute the peripheral sector of the complex.

The protein localises to the cell membrane. It carries out the reaction a quinone + NADH + 5 H(+)(in) = a quinol + NAD(+) + 4 H(+)(out). In terms of biological role, NDH-1 shuttles electrons from NADH, via FMN and iron-sulfur (Fe-S) centers, to quinones in the respiratory chain. The immediate electron acceptor for the enzyme in this species is believed to be a menaquinone. Couples the redox reaction to proton translocation (for every two electrons transferred, four hydrogen ions are translocated across the cytoplasmic membrane), and thus conserves the redox energy in a proton gradient. In Deinococcus geothermalis (strain DSM 11300 / CIP 105573 / AG-3a), this protein is NADH-quinone oxidoreductase subunit C.